Here is a 141-residue protein sequence, read N- to C-terminus: Transcription antitermination protein NusB (141 aa).

Belongs to the NusB family.

In terms of biological role, involved in transcription antitermination. Required for transcription of ribosomal RNA (rRNA) genes. Binds specifically to the boxA antiterminator sequence of the ribosomal RNA (rrn) operons. The chain is Transcription antitermination protein NusB from Treponema pallidum (strain Nichols).